A 428-amino-acid polypeptide reads, in one-letter code: tRNA(Ile)-lysidine synthase (428 aa).

Ser28–Ser33 contacts ATP.

This sequence belongs to the tRNA(Ile)-lysidine synthase family.

The protein resides in the cytoplasm. The enzyme catalyses cytidine(34) in tRNA(Ile2) + L-lysine + ATP = lysidine(34) in tRNA(Ile2) + AMP + diphosphate + H(+). In terms of biological role, ligates lysine onto the cytidine present at position 34 of the AUA codon-specific tRNA(Ile) that contains the anticodon CAU, in an ATP-dependent manner. Cytidine is converted to lysidine, thus changing the amino acid specificity of the tRNA from methionine to isoleucine. This is tRNA(Ile)-lysidine synthase from Streptococcus pyogenes serotype M3 (strain ATCC BAA-595 / MGAS315).